A 715-amino-acid chain; its full sequence is Fatty acid oxidation complex subunit alpha (715 aa).

The enoyl-CoA hydratase/isomerase stretch occupies residues 1 to 190 (MIYEGKAITV…KVGAVDAVVA (190 aa)). Asp-297 serves as a coordination point for substrate. The 3-hydroxyacyl-CoA dehydrogenase stretch occupies residues 312–715 (HDVKQAAVLG…MAKNGQRFFN (404 aa)). NAD(+)-binding positions include Met-325, Asp-344, 401 to 403 (VVE), Lys-408, and Ser-430. His-451 serves as the catalytic For 3-hydroxyacyl-CoA dehydrogenase activity. Asn-454 lines the NAD(+) pocket. Positions 501 and 660 each coordinate substrate.

It in the N-terminal section; belongs to the enoyl-CoA hydratase/isomerase family. This sequence in the C-terminal section; belongs to the 3-hydroxyacyl-CoA dehydrogenase family. Heterotetramer of two alpha chains (FadB) and two beta chains (FadA).

It carries out the reaction a (3S)-3-hydroxyacyl-CoA + NAD(+) = a 3-oxoacyl-CoA + NADH + H(+). The enzyme catalyses a (3S)-3-hydroxyacyl-CoA = a (2E)-enoyl-CoA + H2O. The catalysed reaction is a 4-saturated-(3S)-3-hydroxyacyl-CoA = a (3E)-enoyl-CoA + H2O. It catalyses the reaction (3S)-3-hydroxybutanoyl-CoA = (3R)-3-hydroxybutanoyl-CoA. It carries out the reaction a (3Z)-enoyl-CoA = a 4-saturated (2E)-enoyl-CoA. The enzyme catalyses a (3E)-enoyl-CoA = a 4-saturated (2E)-enoyl-CoA. It participates in lipid metabolism; fatty acid beta-oxidation. Functionally, involved in the aerobic and anaerobic degradation of long-chain fatty acids via beta-oxidation cycle. Catalyzes the formation of 3-oxoacyl-CoA from enoyl-CoA via L-3-hydroxyacyl-CoA. It can also use D-3-hydroxyacyl-CoA and cis-3-enoyl-CoA as substrate. In Pseudomonas entomophila (strain L48), this protein is Fatty acid oxidation complex subunit alpha.